Reading from the N-terminus, the 147-residue chain is Hemoglobin subunit beta (147 aa).

In terms of domain architecture, Globin spans 3–147; sequence EWTDFERATI…VVSSLGRQYH (145 aa). Heme b-binding residues include H64 and H93.

The protein belongs to the globin family. In terms of assembly, hb 1 is a heterotetramer of two alpha-1 and two beta chains. Hb 2 is a heterotetramer of two alpha-2 and two beta chains. In terms of tissue distribution, red blood cells.

Involved in oxygen transport from gills to the various peripheral tissues. The polypeptide is Hemoglobin subunit beta (hbb) (Cottoperca gobio (Frogmouth)).